The primary structure comprises 247 residues: tRNA pseudouridine synthase A (247 aa).

Asp-53 acts as the Nucleophile in catalysis. Residue Tyr-111 participates in substrate binding.

The protein belongs to the tRNA pseudouridine synthase TruA family. Homodimer.

It carries out the reaction uridine(38/39/40) in tRNA = pseudouridine(38/39/40) in tRNA. Functionally, formation of pseudouridine at positions 38, 39 and 40 in the anticodon stem and loop of transfer RNAs. This chain is tRNA pseudouridine synthase A, found in Bacillus licheniformis (strain ATCC 14580 / DSM 13 / JCM 2505 / CCUG 7422 / NBRC 12200 / NCIMB 9375 / NCTC 10341 / NRRL NRS-1264 / Gibson 46).